The following is a 235-amino-acid chain: Urease accessory protein UreF (235 aa).

The protein belongs to the UreF family. As to quaternary structure, ureD, UreF and UreG form a complex that acts as a GTP-hydrolysis-dependent molecular chaperone, activating the urease apoprotein by helping to assemble the nickel containing metallocenter of UreC. The UreE protein probably delivers the nickel.

The protein localises to the cytoplasm. Functionally, required for maturation of urease via the functional incorporation of the urease nickel metallocenter. The protein is Urease accessory protein UreF of Pseudoalteromonas translucida (strain TAC 125).